A 64-amino-acid chain; its full sequence is DNA gyrase inhibitor YacG (64 aa).

Zn(2+)-binding residues include Cys10, Cys13, Cys29, and Cys33.

Belongs to the DNA gyrase inhibitor YacG family. As to quaternary structure, interacts with GyrB. The cofactor is Zn(2+).

In terms of biological role, inhibits all the catalytic activities of DNA gyrase by preventing its interaction with DNA. Acts by binding directly to the C-terminal domain of GyrB, which probably disrupts DNA binding by the gyrase. The sequence is that of DNA gyrase inhibitor YacG from Pectobacterium atrosepticum (strain SCRI 1043 / ATCC BAA-672) (Erwinia carotovora subsp. atroseptica).